Reading from the N-terminus, the 311-residue chain is MSDKDSINRRNVLRKIGGIGVASAVGFSGLASGESLSDDEKQDVIDTIYKSQRVEQIKKKFGGVNIEPKKVQSVTTNQSGDLVTAKLSVSDGDLVYSSVKDTTVIVQFDRSASEIGESWPKNTEAFIKSTSSGVDLLRTATDEEIKDVTEGVNTSEIESADAVNIFIDPESQTYYMEKYDFNNKVLEMFELATGGTSSGKISPTREDQNHEYNVREHKVFNSEKQNIQLQSDCNINSNTAADVILCFNQVGSCALCSPTLVGGPVPTVACLLVVCFGTPNAVSAILEEVDNSCFNLIKDVISCWDEWTSFW.

2 propeptides span residues 1–230 (MSDK…IQLQ) and 267–311 (TVAC…TSFW).

The protein resides in the secreted. In terms of biological role, has antibacterial activity against the haloarchaeons H.salinarium NRC817, Halobacterium GRB and H.gibbonsii. The protein is Halocin-S8 (halS8) of Haloarchaeon S8a.